A 116-amino-acid polypeptide reads, in one-letter code: FK506-binding protein 1 (116 aa).

In terms of domain architecture, PPIase FKBP-type spans 19-116 (GDKVSIHYTG…IFEVELLKIN (98 aa)).

The protein belongs to the FKBP-type PPIase family. FKBP1 subfamily.

It localises to the cytoplasm. The enzyme catalyses [protein]-peptidylproline (omega=180) = [protein]-peptidylproline (omega=0). Its activity is regulated as follows. Inhibited by both FK506 and rapamycin. Functionally, PPIases accelerate the folding of proteins. It catalyzes the cis-trans isomerization of proline imidic peptide bonds in oligopeptides. The chain is FK506-binding protein 1 (fpr1) from Aspergillus oryzae (strain ATCC 42149 / RIB 40) (Yellow koji mold).